A 269-amino-acid polypeptide reads, in one-letter code: Hydroxyethylthiazole kinase (269 aa).

Met-45 is a substrate binding site. ATP-binding residues include Arg-121 and Thr-167. Gly-194 contributes to the substrate binding site.

It belongs to the Thz kinase family. Mg(2+) serves as cofactor.

It carries out the reaction 5-(2-hydroxyethyl)-4-methylthiazole + ATP = 4-methyl-5-(2-phosphooxyethyl)-thiazole + ADP + H(+). It functions in the pathway cofactor biosynthesis; thiamine diphosphate biosynthesis; 4-methyl-5-(2-phosphoethyl)-thiazole from 5-(2-hydroxyethyl)-4-methylthiazole: step 1/1. Its function is as follows. Catalyzes the phosphorylation of the hydroxyl group of 4-methyl-5-beta-hydroxyethylthiazole (THZ). This is Hydroxyethylthiazole kinase from Bacillus cytotoxicus (strain DSM 22905 / CIP 110041 / 391-98 / NVH 391-98).